Reading from the N-terminus, the 145-residue chain is Putative pre-16S rRNA nuclease (145 aa).

The protein belongs to the YqgF nuclease family.

It localises to the cytoplasm. In terms of biological role, could be a nuclease involved in processing of the 5'-end of pre-16S rRNA. The sequence is that of Putative pre-16S rRNA nuclease from Pseudomonas fluorescens.